We begin with the raw amino-acid sequence, 415 residues long: Tyrosine-protein phosphatase non-receptor type 2 (415 aa).

The Tyrosine-protein phosphatase domain occupies 5–275; the sequence is IEREFEELDT…RFSYMAIIEG (271 aa). Tyr-22 is subject to Phosphotyrosine. Residue Ser-52 is modified to Phosphoserine. At Tyr-68 the chain carries Phosphotyrosine. Substrate contacts are provided by residues Asp-182, 216–222, and Gln-260; that span reads CSAGIGR. The active-site Phosphocysteine intermediate is the Cys-216. An S-nitrosocysteine modification is found at Cys-216. A phosphoserine mark is found at Ser-293, Ser-298, and Ser-304. Residues 346–415 form an endoplasmic reticulum location region; that stretch reads ESALRKRIRE…WTLFFQQNAL (70 aa). Positions 376 to 415 are mediates interaction with STX17; the sequence is ERKRKRWLYWQPILTKMGFMSVILVGAFVGWTLFFQQNAL.

It belongs to the protein-tyrosine phosphatase family. Non-receptor class 1 subfamily. In terms of assembly, interacts with RMDN3. Isoform 1 interacts with TMED9. Isoform 1 interacts with STX17; dephosphorylates STX17. Interacts with ITGA1 (via cytoplasmic domain); activates the phosphatase activity towards EGFR. Interacts with TRAF2; probably involved in tumor necrosis factor-mediated signaling. Interacts with MET. Interacts with FAM220A and STAT3; interaction with FAM220A promotes interaction of PTPN2 with transcriptional activator STAT3, leading to dephosphorylation of STAT3 by PTPN2 and negative regulation of STAT3 transcriptional activator activity. Specifically phosphorylated in a cell cycle-dependent manner by cyclin-dependent kinases CDK1 and CDK2. Probably activated through phosphorylation by PKR. As to expression, ubiquitously expressed. Isoform 2 is probably the major isoform. Isoform 1 is expressed in T-cells and in placenta.

It is found in the endoplasmic reticulum. It localises to the endoplasmic reticulum-Golgi intermediate compartment. The protein localises to the nucleus. The protein resides in the cytoplasm. Its subcellular location is the cell membrane. The catalysed reaction is O-phospho-L-tyrosyl-[protein] + H2O = L-tyrosyl-[protein] + phosphate. Non-receptor type tyrosine-specific phosphatase that dephosphorylates receptor protein tyrosine kinases including INSR, EGFR, CSF1R, PDGFR. Also dephosphorylates non-receptor protein tyrosine kinases like JAK1, JAK2, JAK3, Src family kinases, STAT1, STAT3 and STAT6 either in the nucleus or the cytoplasm. Negatively regulates numerous signaling pathways and biological processes like hematopoiesis, inflammatory response, cell proliferation and differentiation, and glucose homeostasis. Plays a multifaceted and important role in the development of the immune system. Functions in T-cell receptor signaling through dephosphorylation of FYN and LCK to control T-cells differentiation and activation. Dephosphorylates CSF1R, negatively regulating its downstream signaling and macrophage differentiation. Negatively regulates cytokine (IL2/interleukin-2 and interferon)-mediated signaling through dephosphorylation of the cytoplasmic kinases JAK1, JAK3 and their substrate STAT1, that propagate signaling downstream of the cytokine receptors. Also regulates the IL6/interleukin-6 and IL4/interleukin-4 cytokine signaling through dephosphorylation of STAT3 and STAT6 respectively. In addition to the immune system, it is involved in anchorage-dependent, negative regulation of EGF-stimulated cell growth. Activated by the integrin ITGA1/ITGB1, it dephosphorylates EGFR and negatively regulates EGF signaling. Dephosphorylates PDGFRB and negatively regulates platelet-derived growth factor receptor-beta signaling pathway and therefore cell proliferation. Negatively regulates tumor necrosis factor-mediated signaling downstream via MAPK through SRC dephosphorylation. May also regulate the hepatocyte growth factor receptor signaling pathway through dephosphorylation of the hepatocyte growth factor receptor MET. Also plays an important role in glucose homeostasis. For instance, negatively regulates the insulin receptor signaling pathway through the dephosphorylation of INSR and control gluconeogenesis and liver glucose production through negative regulation of the IL6 signaling pathways. May also bind DNA. The chain is Tyrosine-protein phosphatase non-receptor type 2 (PTPN2) from Homo sapiens (Human).